Consider the following 253-residue polypeptide: Probable U2 small nuclear ribonucleoprotein A' (253 aa).

LRR repeat units lie at residues 20 to 41, 43 to 64, 65 to 86, and 89 to 110; these read NMREINLRGQKIPVIENMGVTR, QFDVIDLTDNDIRKLDNFPTFS, RLNTLYLHNNRINYIAPDIATK, and NLKTLALTNNNICELGDIEPLA. The region spanning 123-161 is the LRRCT domain; sequence NPITHKDNYRMYMIYKLPTVRVIDFNRVRLTEREAAKKM. 2 disordered regions span residues 163–205 and 232–253; these read KGKS…EDRE and VPEKGWNRQMDQNGADGEAMES. Residues 169–182 are compositionally biased toward basic and acidic residues; the sequence is KARDAIQKSVHTED.

It belongs to the U2 small nuclear ribonucleoprotein A family. As to quaternary structure, interacts with rnp-3.

It localises to the nucleus. Its function is as follows. This protein is associated with sn-RNP U2. It helps the A' protein to bind stem loop IV of U2 snRNA. Required maternally for early embryonic development and zygotically for germline and somatic development. Has a role in the switch from mitosis to meiosis. Might function in alternative splicing. The sequence is that of Probable U2 small nuclear ribonucleoprotein A' (mog-2) from Caenorhabditis elegans.